Here is a 161-residue protein sequence, read N- to C-terminus: Phosphopantetheine adenylyltransferase (161 aa).

Residue Ser-8 coordinates substrate. Residues 8–9 (SF) and His-16 each bind ATP. Residues 36-40 (ENPRK), Leu-72, and Arg-86 each bind substrate. ATP-binding positions include 87 to 89 (GLR), Glu-97, and 122 to 128 (FSFISSS). Glu-132 lines the substrate pocket.

This sequence belongs to the bacterial CoaD family. As to quaternary structure, homohexamer. It depends on Mg(2+) as a cofactor.

It localises to the cytoplasm. The catalysed reaction is (R)-4'-phosphopantetheine + ATP + H(+) = 3'-dephospho-CoA + diphosphate. Its pathway is cofactor biosynthesis; coenzyme A biosynthesis; CoA from (R)-pantothenate: step 4/5. Its function is as follows. Reversibly transfers an adenylyl group from ATP to 4'-phosphopantetheine, yielding dephospho-CoA (dPCoA) and pyrophosphate. This Thermotoga maritima (strain ATCC 43589 / DSM 3109 / JCM 10099 / NBRC 100826 / MSB8) protein is Phosphopantetheine adenylyltransferase.